The sequence spans 132 residues: Small ribosomal subunit protein uS8 (132 aa).

This sequence belongs to the universal ribosomal protein uS8 family. Part of the 30S ribosomal subunit. Contacts proteins S5 and S12.

One of the primary rRNA binding proteins, it binds directly to 16S rRNA central domain where it helps coordinate assembly of the platform of the 30S subunit. The protein is Small ribosomal subunit protein uS8 of Clostridioides difficile (strain 630) (Peptoclostridium difficile).